The following is a 342-amino-acid chain: Replication factor C subunit 3 (342 aa).

Residue 63–70 (GPPGTGKT) participates in ATP binding.

Belongs to the activator 1 small subunits family. As to quaternary structure, heteropentamer of subunits rfc1, rfc2, rfc3, rfc4 and rfc5 that forms a complex (RFC) with PCNA in the presence of ATP. Two other complexes exist where rfc1 can be replaced by either ctf18 or elg1 to form the ctf18-RFC or the elg1-RFC complexes respectively.

It localises to the nucleus. Its function is as follows. The elongation of primed DNA templates by DNA polymerase delta and epsilon requires the action of the accessory proteins PCNA and activator 1. Subunit 3 binds ATP. Also involved in replication and DNA damage checkpoint controls, probably functioning as a checkpoint sensor. In Schizosaccharomyces pombe (strain 972 / ATCC 24843) (Fission yeast), this protein is Replication factor C subunit 3 (rfc3).